Consider the following 262-residue polypeptide: uncharacterized protein (262 aa).

This sequence belongs to the AB hydrolase superfamily. AB hydrolase 2 family.

This is an uncharacterized protein from Mycosarcoma maydis (Corn smut fungus).